A 681-amino-acid polypeptide reads, in one-letter code: MQLEHCLSPSIMLSKKFLNVSSSYPHSGGSELVLHDHPIISTTDNLERSSPLKKITRGMTNQSDTDNFPDSKDSPGDVQRSKLSPVLDGVSELRHSFDGSAADRYLLSQSSQPQSAATAPSAMFPYPSQHGPAHPAFSIGSPSRYMAHHPVITNGAYNSLLSNSSPQGYPTAGYPYPQQYGHSYQGAPFYQFSSTQPGLVPGKAQVYLCNRPLWLKFHRHQTEMIITKQGRRMFPFLSFNISGLDPTAHYNIFVDVILADPNHWRFQGGKWVPCGKADTNVQGNRVYMHPDSPNTGAHWMRQEISFGKLKLTNNKGASNNNGQMVVLQSLHKYQPRLHVVEVNEDGTEDTSQPGRVQTFTFPETQFIAVTAYQNTDITQLKIDHNPFAKGFRDNYDTIYTGCDMDRLTPSPNDSPRSQIVPGARYAMAGSFLQDQFVSNYAKARFHPGAGAGPGPGTDRSVPHTNGLLSPQQAEDPGAPSPQRWFVTPANNRLDFAASAYDTATDFAGNAATLLSYAAAGVKALPLQAAGCTGRPLGYYADPSGWGARSPPQYCGAKSGSVLPCWPNSAAAAARMAGANPYLGEEAEGLAAERSPLAPAAEDAKPKDLSDSSWIETPSSIKSIDSSDSGIYEQAKRRRISPADTPVSESSSPLKSEVLAQRDCEKNCAKDIGGYYGFYSHS.

Disordered regions lie at residues 43–83 (TDNL…RSKL) and 108–127 (SQSSQPQSAATAPSAMFPYP). The segment covering 58–68 (GMTNQSDTDNF) has biased composition (polar residues). Over residues 108-122 (SQSSQPQSAATAPSA) the composition is skewed to low complexity. The T-box DNA-binding region spans 213 to 393 (LWLKFHRHQT…HNPFAKGFRD (181 aa)). A Phosphothreonine modification is found at Thr408. Ser410 carries the post-translational modification Phosphoserine. The interval 447-483 (PGAGAGPGPGTDRSVPHTNGLLSPQQAEDPGAPSPQR) is disordered. Residues 462 to 472 (PHTNGLLSPQQ) are compositionally biased toward polar residues. Ser594 bears the Phosphoserine mark. The disordered stretch occupies residues 597 to 655 (APAAEDAKPKDLSDSSWIETPSSIKSIDSSDSGIYEQAKRRRISPADTPVSESSSPLKS). A compositionally biased stretch (low complexity) spans 618 to 628 (SSIKSIDSSDS). At Ser640 the chain carries Phosphoserine.

Homodimer. Part of a complex containing CASK, TBR1 and TSPYL2; may modulate gene expression in response to neuronal synaptic activity. Forms homodimers. Interacts with FOXP2. Interacts with FOXP1. Interacts with BCL11A. Expressed in the developing and adult cortex. Expressed in the olfactory bulbs.

The protein localises to the nucleus. Transcriptional repressor involved in multiple aspects of cortical development, including neuronal migration, laminar and areal identity, and axonal projection. As transcriptional repressor of FEZF2, it blocks the formation of the corticospinal (CS) tract from layer 6 projection neurons, thereby restricting the origin of CS axons specifically to layer 5 neurons. This chain is T-box brain protein 1 (Tbr1), found in Mus musculus (Mouse).